The primary structure comprises 255 residues: Large ribosomal subunit protein uL2 (255 aa).

Residues 211–235 (PHGGGNHQHVGHATTTKRDDPAGKK) are disordered.

Belongs to the universal ribosomal protein uL2 family.

In Dictyostelium discoideum (Social amoeba), this protein is Large ribosomal subunit protein uL2 (rpl8).